The primary structure comprises 126 residues: Protein ApaG (126 aa).

The ApaG domain occupies 2–126 (SDPRYQIDVS…FRLAVPGALH (125 aa)).

This is Protein ApaG from Pseudomonas fluorescens (strain SBW25).